Reading from the N-terminus, the 314-residue chain is E3 ubiquitin-protein ligase SINA-like 11 (314 aa).

Polar residues predominate over residues 1–12; the sequence is MEDSNSHPQNQT. The interval 1 to 31 is disordered; that stretch reads MEDSNSHPQNQTSKRKSSHPQKKQRMENETR. The segment covering 13 to 23 has biased composition (basic residues); that stretch reads SKRKSSHPQKK. The RING-type; degenerate zinc-finger motif lies at 43–81; sequence CPVCFEPLTIPTFQCDDGHIVCNFCFAKVSNKCPGPGCD. The segment at 95 to 280 is SBD; sequence VLESAFVPCQ…PANEVQQVTI (186 aa). The SIAH-type zinc-finger motif lies at 98 to 156; that stretch reads SAFVPCQNTEFGCTKSVSYEKVSSHEKECNYSQCSCPNLECNYTGSYNIIYGHFMRRHL. Cysteine 103, cysteine 110, histidine 122, cysteine 126, cysteine 133, cysteine 138, histidine 150, and histidine 155 together coordinate Zn(2+).

Belongs to the SINA (Seven in absentia) family.

The enzyme catalyses S-ubiquitinyl-[E2 ubiquitin-conjugating enzyme]-L-cysteine + [acceptor protein]-L-lysine = [E2 ubiquitin-conjugating enzyme]-L-cysteine + N(6)-ubiquitinyl-[acceptor protein]-L-lysine.. It functions in the pathway protein modification; protein ubiquitination. In terms of biological role, E3 ubiquitin-protein ligase that mediates ubiquitination and subsequent proteasomal degradation of target proteins. E3 ubiquitin ligases accept ubiquitin from an E2 ubiquitin-conjugating enzyme in the form of a thioester and then directly transfers the ubiquitin to targeted substrates. It probably triggers the ubiquitin-mediated degradation of different substrates. This Arabidopsis thaliana (Mouse-ear cress) protein is E3 ubiquitin-protein ligase SINA-like 11.